Consider the following 450-residue polypeptide: Aspartyl/glutamyl-tRNA(Asn/Gln) amidotransferase subunit B (450 aa).

The protein belongs to the GatB/GatE family. GatB subfamily. As to quaternary structure, heterotrimer of A, B and C subunits.

The enzyme catalyses L-glutamyl-tRNA(Gln) + L-glutamine + ATP + H2O = L-glutaminyl-tRNA(Gln) + L-glutamate + ADP + phosphate + H(+). It catalyses the reaction L-aspartyl-tRNA(Asn) + L-glutamine + ATP + H2O = L-asparaginyl-tRNA(Asn) + L-glutamate + ADP + phosphate + 2 H(+). Its function is as follows. Allows the formation of correctly charged Asn-tRNA(Asn) or Gln-tRNA(Gln) through the transamidation of misacylated Asp-tRNA(Asn) or Glu-tRNA(Gln) in organisms which lack either or both of asparaginyl-tRNA or glutaminyl-tRNA synthetases. The reaction takes place in the presence of glutamine and ATP through an activated phospho-Asp-tRNA(Asn) or phospho-Glu-tRNA(Gln). The chain is Aspartyl/glutamyl-tRNA(Asn/Gln) amidotransferase subunit B from Methanobrevibacter smithii (strain ATCC 35061 / DSM 861 / OCM 144 / PS).